Reading from the N-terminus, the 162-residue chain is Beta-lactoglobulin-3 (162 aa).

2 cysteine pairs are disulfide-bonded: cysteine 66–cysteine 160 and cysteine 106–cysteine 119.

This sequence belongs to the calycin superfamily. Lipocalin family. Monomer.

It localises to the secreted. Functionally, lactoglobulin is the primary component of whey, it binds retinol and is probably involved in the transport of that molecule. In Felis catus (Cat), this protein is Beta-lactoglobulin-3 (LGB3).